Consider the following 661-residue polypeptide: UvrABC system protein C (661 aa).

The 80-residue stretch at 26 to 105 folds into the GIY-YIG domain; that stretch reads AEPGCYLMRD…IKNHQPHFNV (80 aa). In terms of domain architecture, UVR spans 215 to 250; the sequence is DELQNLLQEQMHKYADRTDYESAARVRDQLQGLDQL.

Belongs to the UvrC family. As to quaternary structure, interacts with UvrB in an incision complex.

It is found in the cytoplasm. Its function is as follows. The UvrABC repair system catalyzes the recognition and processing of DNA lesions. UvrC both incises the 5' and 3' sides of the lesion. The N-terminal half is responsible for the 3' incision and the C-terminal half is responsible for the 5' incision. The protein is UvrABC system protein C of Synechococcus sp. (strain CC9902).